The chain runs to 168 residues: Nicotinamide-nucleotide adenylyltransferase (168 aa).

Belongs to the archaeal NMN adenylyltransferase family.

The protein resides in the cytoplasm. The catalysed reaction is beta-nicotinamide D-ribonucleotide + ATP + H(+) = diphosphate + NAD(+). It functions in the pathway cofactor biosynthesis; NAD(+) biosynthesis; NAD(+) from nicotinamide D-ribonucleotide: step 1/1. In Methanocorpusculum labreanum (strain ATCC 43576 / DSM 4855 / Z), this protein is Nicotinamide-nucleotide adenylyltransferase.